The primary structure comprises 149 residues: Stathmin (149 aa).

Ala-2 carries the post-translational modification N-acetylalanine. Residue Ser-4 is modified to Phosphoserine. One can recognise an SLD domain in the interval 4-145 (SDIQVKELEK…NKESKDPADE (142 aa)). Lys-9 carries the N6-acetyllysine modification. Ser-16 bears the Phosphoserine mark. Ser-25 carries the post-translational modification Phosphoserine; by CDK1, MAPK1 and MAPK3. Lys-29 is modified (N6-methyllysine). Residue Ser-31 is modified to Phosphoserine. Position 38 is a phosphoserine; by CDK1, MAPK1 and MAPK3 (Ser-38). A coiled-coil region spans residues 41–140 (KKKDLSLEEI…EEVRKNKESK (100 aa)). Residue Ser-63 is modified to Phosphoserine; by PKA. Residues Lys-100 and Lys-119 each carry the N6-acetyllysine modification. Over residues 121 to 143 (ERLREKDKHIEEVRKNKESKDPA) the composition is skewed to basic and acidic residues. The tract at residues 121–149 (ERLREKDKHIEEVRKNKESKDPADETEAD) is disordered.

Belongs to the stathmin family. As to quaternary structure, binds to two alpha/beta-tubulin heterodimers. Interacts with KIST. Many different phosphorylated forms are observed depending on specific combinations among the sites which can be phosphorylated. MAPK is responsible for the phosphorylation of stathmin in response to NGF. Phosphorylation at Ser-16 seems to be required for neuron polarization.

The protein resides in the cytoplasm. It localises to the cytoskeleton. Its function is as follows. Involved in the regulation of the microtubule (MT) filament system by destabilizing microtubules. Prevents assembly and promotes disassembly of microtubules. Its phosphorylation at Ser-16 may be required for axon formation during neurogenesis. Involved in the control of the learned and innate fear. The sequence is that of Stathmin (STMN1) from Bos taurus (Bovine).